Here is a 360-residue protein sequence, read N- to C-terminus: tRNA N6-adenosine threonylcarbamoyltransferase (360 aa).

Fe cation-binding residues include His-115 and His-119. Residues 137–141 (LVSGG), Asp-170, Gly-183, and Asn-283 each bind substrate. Asp-311 contributes to the Fe cation binding site.

Belongs to the KAE1 / TsaD family. Requires Fe(2+) as cofactor.

Its subcellular location is the cytoplasm. It catalyses the reaction L-threonylcarbamoyladenylate + adenosine(37) in tRNA = N(6)-L-threonylcarbamoyladenosine(37) in tRNA + AMP + H(+). In terms of biological role, required for the formation of a threonylcarbamoyl group on adenosine at position 37 (t(6)A37) in tRNAs that read codons beginning with adenine. Is involved in the transfer of the threonylcarbamoyl moiety of threonylcarbamoyl-AMP (TC-AMP) to the N6 group of A37, together with TsaE and TsaB. TsaD likely plays a direct catalytic role in this reaction. The chain is tRNA N6-adenosine threonylcarbamoyltransferase from Rhizobium meliloti (strain 1021) (Ensifer meliloti).